A 259-amino-acid polypeptide reads, in one-letter code: 3-deoxy-manno-octulosonate cytidylyltransferase (259 aa).

It belongs to the KdsB family.

The protein localises to the cytoplasm. It carries out the reaction 3-deoxy-alpha-D-manno-oct-2-ulosonate + CTP = CMP-3-deoxy-beta-D-manno-octulosonate + diphosphate. It participates in nucleotide-sugar biosynthesis; CMP-3-deoxy-D-manno-octulosonate biosynthesis; CMP-3-deoxy-D-manno-octulosonate from 3-deoxy-D-manno-octulosonate and CTP: step 1/1. The protein operates within bacterial outer membrane biogenesis; lipopolysaccharide biosynthesis. In terms of biological role, activates KDO (a required 8-carbon sugar) for incorporation into bacterial lipopolysaccharide in Gram-negative bacteria. This is 3-deoxy-manno-octulosonate cytidylyltransferase from Nitrosococcus oceani (strain ATCC 19707 / BCRC 17464 / JCM 30415 / NCIMB 11848 / C-107).